The primary structure comprises 104 residues: L-rhamnose mutarotase (104 aa).

Residue Y18 participates in substrate binding. Residue H22 is the Proton donor of the active site. Substrate contacts are provided by residues Y41 and 76–77; that span reads WW.

The protein belongs to the rhamnose mutarotase family. As to quaternary structure, homodimer.

The protein localises to the cytoplasm. It carries out the reaction alpha-L-rhamnose = beta-L-rhamnose. Its pathway is carbohydrate metabolism; L-rhamnose metabolism. Involved in the anomeric conversion of L-rhamnose. This Shigella flexneri serotype 5b (strain 8401) protein is L-rhamnose mutarotase.